The following is a 402-amino-acid chain: Multidrug resistance protein MdtH (402 aa).

Residues 1–12 (MSRVSQARNLGK) are Cytoplasmic-facing. Residues 13–33 (YFLLIDNMLVVLGFFVVFPLI) traverse the membrane as a helical segment. Residues 34-98 (SIRFVDQMGW…GFATMGIAHE (65 aa)) lie on the Periplasmic side of the membrane. A helical membrane pass occupies residues 99 to 116 (PWLLWFSCFLSGLGGTLF). The Cytoplasmic portion of the chain corresponds to 117–138 (DPPRSALVVKLIRPEQRGRFFS). Residues 139–159 (LLMMQDSAGAVIGALLGSWLL) traverse the membrane as a helical segment. The Periplasmic portion of the chain corresponds to 160 to 164 (QYDFR). A helical transmembrane segment spans residues 165–185 (LVCATGAILFILCALFNAWLL). Topologically, residues 186-213 (PAWKLSTVRTPVREGMRRVMSDKRFVTY) are cytoplasmic. A helical transmembrane segment spans residues 214 to 234 (VLTLAGYYMLAVQVMLMLPIM). The Periplasmic portion of the chain corresponds to 235–243 (VNDIAGSPA). Residues 244–264 (AVKWMYAIEACLSLTLLYPIA) traverse the membrane as a helical segment. Residues 265–276 (RWSEKRFRLEHR) are Cytoplasmic-facing. The helical transmembrane segment at 277–297 (LMAGLLVMSLSMIPIGMVGNL) threads the bilayer. The Periplasmic segment spans residues 298–299 (QQ). The helical transmembrane segment at 300–320 (LFTLICAFYIGSVIAEPARET) threads the bilayer. Residues 321–339 (LSASLADARARGSYMGFSR) lie on the Cytoplasmic side of the membrane. The helical transmembrane segment at 340–360 (LGLAIGGAIGYIGGGWLFDMG) threads the bilayer. Topologically, residues 361–367 (KALAQPE) are periplasmic. Residues 368-388 (LPWMMLGIIGFITFLALGWQF) traverse the membrane as a helical segment. Over 389–402 (SHKRTPRRMLEPGA) the chain is Cytoplasmic.

The protein belongs to the major facilitator superfamily. DHA1 family. MdtH (TC 2.A.1.2.21) subfamily.

The protein localises to the cell inner membrane. This is Multidrug resistance protein MdtH from Salmonella schwarzengrund (strain CVM19633).